A 564-amino-acid chain; its full sequence is Mitochondrial distribution and morphology protein 34 (564 aa).

The region spanning 1-208 (MAFNFNWSPL…VPEYRDRESE (208 aa)) is the SMP-LTD domain. Disordered regions lie at residues 208 to 240 (ESVN…NALN), 336 to 397 (SGGS…SAPT), 404 to 423 (QFSE…PQND), 434 to 517 (RISQ…DPRQ), and 532 to 564 (IQEE…AYGH). Residues 209 to 219 (SVNTLDQSSGP) are compositionally biased toward polar residues. Positions 351 to 365 (SGRHPRPHGKKRKKR) are enriched in basic residues. Over residues 366–376 (VVDLRRPKTTD) the composition is skewed to basic and acidic residues. Residues 380–390 (SVSGESVFSSE) show a composition bias toward low complexity. Polar residues-rich tracts occupy residues 438-462 (GEHT…SRNS) and 477-503 (PRNS…SSAI).

Belongs to the MDM34 family. As to quaternary structure, component of the ER-mitochondria encounter structure (ERMES) or MDM complex, composed of mmm1, mdm10, mdm12 and mdm34.

The protein resides in the mitochondrion outer membrane. Functionally, component of the ERMES/MDM complex, which serves as a molecular tether to connect the endoplasmic reticulum (ER) and mitochondria. Components of this complex are involved in the control of mitochondrial shape and protein biogenesis, and function in nonvesicular lipid trafficking between the ER and mitochondria. Mdm34 is required for the interaction of the ER-resident membrane protein mmm1 and the outer mitochondrial membrane-resident beta-barrel protein mdm10. This chain is Mitochondrial distribution and morphology protein 34, found in Talaromyces stipitatus (strain ATCC 10500 / CBS 375.48 / QM 6759 / NRRL 1006) (Penicillium stipitatum).